Reading from the N-terminus, the 171-residue chain is Sec-independent protein translocase protein TatB (171 aa).

The chain crosses the membrane as a helical span at residues 2–22; that stretch reads FDGIGFMELLLIGVLGLVVLG. Residues 69 to 171 form a disordered region; that stretch reads SKGLSNLSPE…DTRSNPKANG (103 aa). Residues 88–97 show a composition bias toward polar residues; that stretch reads QAAQSVNRPY. Composition is skewed to low complexity over residues 114–130 and 138–158; these read HSPVSSTVQTSQVHTSP and PTATVEASPTSASPATPSEPS. Polar residues predominate over residues 160 to 171; it reads GADTRSNPKANG.

Belongs to the TatB family. In terms of assembly, the Tat system comprises two distinct complexes: a TatABC complex, containing multiple copies of TatA, TatB and TatC subunits, and a separate TatA complex, containing only TatA subunits. Substrates initially bind to the TatABC complex, which probably triggers association of the separate TatA complex to form the active translocon.

The protein localises to the cell inner membrane. Part of the twin-arginine translocation (Tat) system that transports large folded proteins containing a characteristic twin-arginine motif in their signal peptide across membranes. Together with TatC, TatB is part of a receptor directly interacting with Tat signal peptides. TatB may form an oligomeric binding site that transiently accommodates folded Tat precursor proteins before their translocation. In Shewanella baltica (strain OS185), this protein is Sec-independent protein translocase protein TatB.